Reading from the N-terminus, the 855-residue chain is DNA mismatch repair protein MutS (855 aa).

ATP is bound at residue 613 to 620 (GPNMGGKS). The segment at 796 to 816 (TTSLPHEMPSQQSGKPASPMQ) is disordered.

It belongs to the DNA mismatch repair MutS family.

Its function is as follows. This protein is involved in the repair of mismatches in DNA. It is possible that it carries out the mismatch recognition step. This protein has a weak ATPase activity. The protein is DNA mismatch repair protein MutS of Pseudomonas aeruginosa (strain LESB58).